The following is a 547-amino-acid chain: Nitrate transporter 2.1 (547 aa).

12 helical membrane passes run 53–73 (WICF…APII), 86–106 (NAGV…GIVV), 113–133 (YGAA…ALVT), 143–163 (FFIG…GTMF), 173–193 (AIAA…MPLI), 211–231 (AFFV…LLGI), 262–280 (LGNY…SFGV), 296–316 (FGLN…MNLF), 338–358 (IWAL…LGKV), 366–386 (IVIM…HFGI), 400–420 (GLVG…WFAG), and 433–453 (GFVY…FIWF).

It belongs to the major facilitator superfamily. Nitrate/nitrite porter (TC 2.A.1.8) family.

It localises to the cell membrane. Its activity is regulated as follows. Nitrite transport mediated by system 1 is very sensitive to inhibition by nitrate. Functionally, involved in nitrate transport, but does not seem to be able to mediate transport by its own. Acts as a dual component transporter with NAR2 (system 1). Imports nitrate with high affinity when expressed with NAR2 in a heterologous system (Xenopus oocytes). Involved in a high affinity and a high capacity transport specific for both nitrate and nitrite. The chain is Nitrate transporter 2.1 from Chlamydomonas reinhardtii (Chlamydomonas smithii).